A 470-amino-acid chain; its full sequence is Nuclear receptor subfamily 0 group B member 1 (470 aa).

3 tandem repeats follow at residues 1–67 (MAGE…YRCC), 68–133 (FCGK…YRCC), and 134–200 (FCGE…YRCC). The segment at 1-253 (MAGENHQWQG…RPVALKSPQV (253 aa)) is 4 X 67 AA tandem repeats. 3 consecutive short sequence motifs (LXXLL motif) follow at residues 13 to 17 (LYNML), 80 to 84 (LYSML), and 146 to 150 (LYSLL). One copy of the 4; truncated repeat lies at 201–253 (FCGEDHPQQGSTLYCVPTSTNQAQAAPEERPRAPWWDTSSGALRPVALKSPQV). The 265-residue stretch at 205 to 469 (DHPQQGSTLY…DMMLEMLCTK (265 aa)) folds into the NR LBD domain. The short motif at 461–466 (MMLEML) is the AF-2 motif element.

This sequence belongs to the nuclear hormone receptor family. NR0 subfamily. Homodimer. Interacts with NR5A1, NR5A2, NR0B2 and with COPS2. Interacts with ESRRB; represses ESRRB activity at the GATA6 promoter.

The protein resides in the nucleus. It localises to the cytoplasm. Nuclear receptor that lacks a DNA-binding domain and acts as a corepressor that inhibits the transcriptional activity of other nuclear receptors through heterodimeric interactions. Component of a cascade required for the development of the hypothalamic-pituitary-adrenal-gonadal axis. May also have a role in the development of the embryo and in the maintenance of embryonic stem cell pluripotency. The chain is Nuclear receptor subfamily 0 group B member 1 (NR0B1) from Homo sapiens (Human).